The primary structure comprises 302 residues: Cobalt-precorrin-6A reductase (302 aa).

The segment covering 1–10 (MQTPEIKEGT) has biased composition (basic and acidic residues). Residues 1–37 (MQTPEIKEGTEQYLWRRKTMNPGDKGVKRKGSDRQRE) form a disordered region.

The protein belongs to the precorrin-6x reductase family.

The catalysed reaction is Co-precorrin-6B + NAD(+) = Co-precorrin-6A + NADH + H(+). It participates in cofactor biosynthesis; adenosylcobalamin biosynthesis; cob(II)yrinate a,c-diamide from sirohydrochlorin (anaerobic route): step 7/10. Functionally, catalyzes the reduction of the macrocycle of cobalt-precorrin-6A to cobalt-precorrin-6B. In Methanothermobacter thermautotrophicus (strain ATCC 29096 / DSM 1053 / JCM 10044 / NBRC 100330 / Delta H) (Methanobacterium thermoautotrophicum), this protein is Cobalt-precorrin-6A reductase (cbiJ).